A 623-amino-acid chain; its full sequence is Mu-like prophage FluMu defective tail fiber protein (623 aa).

It to phage Mu protein S.

The protein is Mu-like prophage FluMu defective tail fiber protein of Haemophilus influenzae (strain ATCC 51907 / DSM 11121 / KW20 / Rd).